The chain runs to 182 residues: Ribosome maturation factor RimM (182 aa).

The PRC barrel domain maps to 106–179; that stretch reads EGEFHVLDLI…RIEITPPPGL (74 aa).

The protein belongs to the RimM family. Binds ribosomal protein uS19.

It localises to the cytoplasm. In terms of biological role, an accessory protein needed during the final step in the assembly of 30S ribosomal subunit, possibly for assembly of the head region. Essential for efficient processing of 16S rRNA. May be needed both before and after RbfA during the maturation of 16S rRNA. It has affinity for free ribosomal 30S subunits but not for 70S ribosomes. The polypeptide is Ribosome maturation factor RimM (Synechococcus elongatus (strain ATCC 33912 / PCC 7942 / FACHB-805) (Anacystis nidulans R2)).